We begin with the raw amino-acid sequence, 109 residues long: Large ribosomal subunit protein uL22 (109 aa).

The protein belongs to the universal ribosomal protein uL22 family. As to quaternary structure, part of the 50S ribosomal subunit.

This protein binds specifically to 23S rRNA; its binding is stimulated by other ribosomal proteins, e.g. L4, L17, and L20. It is important during the early stages of 50S assembly. It makes multiple contacts with different domains of the 23S rRNA in the assembled 50S subunit and ribosome. In terms of biological role, the globular domain of the protein is located near the polypeptide exit tunnel on the outside of the subunit, while an extended beta-hairpin is found that lines the wall of the exit tunnel in the center of the 70S ribosome. This Polaromonas naphthalenivorans (strain CJ2) protein is Large ribosomal subunit protein uL22.